The sequence spans 483 residues: uncharacterized protein (483 aa).

In terms of domain architecture, TRAM spans 11 to 71 (RYRKGDIIEL…SRYLEARAIE (61 aa)). Residues C84, C90, C93, and C187 each coordinate [4Fe-4S] cluster. Residues Q312, Y341, E362, and D412 each coordinate S-adenosyl-L-methionine. C439 acts as the Nucleophile in catalysis.

This sequence belongs to the class I-like SAM-binding methyltransferase superfamily. RNA M5U methyltransferase family.

This is an uncharacterized protein from Chlorobaculum tepidum (strain ATCC 49652 / DSM 12025 / NBRC 103806 / TLS) (Chlorobium tepidum).